We begin with the raw amino-acid sequence, 586 residues long: Probable lysosomal cobalamin transporter (586 aa).

Helical transmembrane passes span 10–30, 47–67, 96–116, 147–167, 191–211, 315–335, 378–398, 420–440, and 509–529; these read IWIA…VTTF, VVSL…IALV, IVYY…IPFA, SGFI…PAAG, ALTF…VLYT, LVGG…MLIT, IIMA…LATV, ILIA…SIAM, and VFGA…LIVL. N-linked (GlcNAc...) asparagine glycosylation occurs at N540.

It belongs to the LIMR family. LMBRD1 subfamily.

It is found in the lysosome membrane. In terms of biological role, probable lysosomal cobalamin transporter. Required to export cobalamin from lysosomes allowing its conversion to cofactors. The polypeptide is Probable lysosomal cobalamin transporter (Pyricularia oryzae (strain 70-15 / ATCC MYA-4617 / FGSC 8958) (Rice blast fungus)).